The primary structure comprises 552 residues: DnaJ homolog subfamily C member 1 (552 aa).

Positions 1–43 are cleaved as a signal peptide; the sequence is MWVPGFGSARLPQRRRSGLESSSVRPLWLLLLFLLAAVRPVRA. At 44-149 the chain is on the lumenal side; that stretch reads WESGDLELFD…RRVRKMSNAE (106 aa). The 74-residue stretch at 56-129 folds into the J domain; sequence EEVQLNFYEF…RYDDVLINGL (74 aa). The chain crosses the membrane as a helical span at residues 150–170; sequence LALLLFIILTVGHYAVVWSIY. Residues 171–552 lie on the Cytoplasmic side of the membrane; sequence LEKQLDELLG…LVQKKKQAKS (382 aa). In terms of domain architecture, SANT 1 spans 323-377; the sequence is RQAPEWTEEDLSQLTRSMVKFPGGTPGRWDKIAHELGRSVTDVTTKAKELKDSVT. The interval 370–495 is disordered; the sequence is KELKDSVTSS…ERTRAAEEAW (126 aa). At S379 the chain carries Phosphoserine. Residues 419-431 show a composition bias toward acidic residues; it reads MEDEEHEAAEGEQ. Basic and acidic residues predominate over residues 453 to 470; that stretch reads TRVEPEEKLRGKRQKDFD. S477 and S478 each carry phosphoserine. A compositionally biased stretch (basic and acidic residues) spans 480–492; the sequence is EEKQRKERTRAAE. The 56-residue stretch at 490-545 folds into the SANT 2 domain; the sequence is AAEEAWTQSQQKLLELALQQYPKGASDRWDKIAKCVPSKSKEDCIARYKLLVELVQ.

As to quaternary structure, interacts (via J domain) with HSPA5. Interacts (via cytosolic domain) with ribosomes. Interacts (via SANT 2 domain) with SERPINA3; the interaction delays the formation of the covalent inhibitory complex SERPINA3-chymotrypsin, but does not alter the catalytic activity of SERPINA3. Interacts (via SANT 2 domain) with ITIH4 (via C-terminus); the interaction protects ITIH4 against in vitro cleavage by kallikrein. Widely expressed.

It localises to the endoplasmic reticulum membrane. The protein localises to the nucleus membrane. Its subcellular location is the microsome membrane. Its function is as follows. May modulate protein synthesis. In Mus musculus (Mouse), this protein is DnaJ homolog subfamily C member 1 (Dnajc1).